A 62-amino-acid polypeptide reads, in one-letter code: Small ribosomal subunit protein uS14 (62 aa).

The Zn(2+) site is built by Cys-25, Cys-28, Cys-41, and Cys-44.

It belongs to the universal ribosomal protein uS14 family. Zinc-binding uS14 subfamily. In terms of assembly, part of the 30S ribosomal subunit. Contacts proteins S3 and S10. It depends on Zn(2+) as a cofactor.

Binds 16S rRNA, required for the assembly of 30S particles and may also be responsible for determining the conformation of the 16S rRNA at the A site. The chain is Small ribosomal subunit protein uS14 from Persephonella marina (strain DSM 14350 / EX-H1).